We begin with the raw amino-acid sequence, 483 residues long: Betaine aldehyde dehydrogenase (483 aa).

Positions 27 and 93 each coordinate K(+). An NAD(+)-binding site is contributed by 149–151; it reads GAW. The active-site Charge relay system is lysine 161. 175-178 is a binding site for NAD(+); it reads KPSE. Residue valine 179 coordinates K(+). 228-231 is a binding site for NAD(+); that stretch reads SVPT. Valine 243 provides a ligand contact to K(+). Glutamate 249 (proton acceptor) is an active-site residue. Glycine 251, cysteine 283, and glutamate 380 together coordinate NAD(+). Cysteine 283 serves as the catalytic Nucleophile. Cysteine 283 carries the post-translational modification Cysteine sulfenic acid (-SOH). The K(+) site is built by lysine 450 and glycine 453. Residue glutamate 457 is the Charge relay system of the active site.

This sequence belongs to the aldehyde dehydrogenase family. In terms of assembly, dimer of dimers. Requires K(+) as cofactor.

The enzyme catalyses betaine aldehyde + NAD(+) + H2O = glycine betaine + NADH + 2 H(+). It participates in amine and polyamine biosynthesis; betaine biosynthesis via choline pathway; betaine from betaine aldehyde: step 1/1. Its function is as follows. Involved in the biosynthesis of the osmoprotectant glycine betaine. Catalyzes the irreversible oxidation of betaine aldehyde to the corresponding acid. The sequence is that of Betaine aldehyde dehydrogenase from Cereibacter sphaeroides (strain ATCC 17023 / DSM 158 / JCM 6121 / CCUG 31486 / LMG 2827 / NBRC 12203 / NCIMB 8253 / ATH 2.4.1.) (Rhodobacter sphaeroides).